The following is a 286-amino-acid chain: Toxin zeta (286 aa).

Residue 39–46 (GQPGSGKT) participates in ATP binding. The tract at residues 249 to 286 (MVQNQHQETPEFKAIQQKMESLQPPTPPIPKTPKLPGI) is disordered. A compositionally biased stretch (pro residues) spans 272 to 286 (PPTPPIPKTPKLPGI).

This sequence belongs to the zeta toxin family. As to quaternary structure, in the presence of the epsilon antitoxin, forms an inactive PezA(2)PezT(2) heterotetramer.

It carries out the reaction UDP-N-acetyl-alpha-D-glucosamine + ATP = UDP-N-acetyl-alpha-D-glucosamine 3'-phosphate + ADP + H(+). In terms of biological role, toxic component of a type II toxin-antitoxin (TA) system. Phosphorylates UDP-N-acetyl-D-glucosamine (UNAG) on the 3'-hydroxyl group of the N-acetyl-D-glucosamine moiety, yielding UNAG-3P. UNAG-3P inhibits MurA, the first committed step in cell wall synthesis, which is then blocked. Phosphorylation is inhibited by cognate epsilon antitoxin. Part of a postsegregational killing (PSK) system involved in the killing of plasmid-free cells. The zeta toxin induces programmed cell death. The chain is Toxin zeta from Enterococcus hirae.